Here is a 635-residue protein sequence, read N- to C-terminus: Protein NSP-INTERACTING KINASE 2 (635 aa).

Positions 1 to 32 (MLQGRREAKKSYALFSSTFFFFFICFLSSSSA) are cleaved as a signal peptide. The Extracellular segment spans residues 33-248 (ELTDKGVNFE…DGGTKNRKIA (216 aa)). Asparagine 92 and asparagine 103 each carry an N-linked (GlcNAc...) asparagine glycan. LRR repeat units lie at residues 104 to 128 (LTNLQTVLLQNNYITGNIPHEIGKL), 129 to 153 (MKLKTLDLSTNNFTGQIPFTLSYSK), 155 to 176 (LQYLRVNNNSLTGTIPSSLANM), and 177 to 200 (TQLTFLDLSYNNLSGPVPRSLAKT). N-linked (GlcNAc...) asparagine glycosylation is found at asparagine 140, asparagine 162, asparagine 175, asparagine 188, asparagine 219, asparagine 231, and asparagine 235. The interval 214 to 242 (TEKDCNGTQPKPMSITLNSSQNKSSDGGT) is disordered. Polar residues predominate over residues 219 to 241 (NGTQPKPMSITLNSSQNKSSDGG). Residues 249–269 (VVFGVSLTCVCLLIIGFGFLL) traverse the membrane as a helical segment. Topologically, residues 270-635 (WWRRRHNKQV…VQAMELSGPR (366 aa)) are cytoplasmic. Threonine 309 carries the phosphothreonine modification. A Protein kinase domain is found at 312–591 (FSSKNLVGKG…EGDGLVEKWE (280 aa)). ATP is bound by residues 318 to 326 (VGKGGFGNV) and lysine 340. Phosphoserine is present on residues serine 393 and serine 396. At threonine 408 the chain carries Phosphothreonine. An interaction with geminivirus NSP protein region spans residues 422–502 (YLHEQCDPKI…DVFGFGILLL (81 aa)). Aspartate 435 (proton acceptor) is an active-site residue. Phosphothreonine occurs at positions 468, 469, and 474. Tyrosine 482 bears the Phosphotyrosine mark. Serine 484 bears the Phosphoserine mark. A Phosphothreonine modification is found at threonine 485. A Phosphoserine modification is found at serine 489. Threonine 564 carries the post-translational modification Phosphothreonine. A compositionally biased stretch (polar residues) spans 593–613 (SSQRAETNRSYSKPNEFSSSE). Residues 593 to 621 (SSQRAETNRSYSKPNEFSSSERYSDLTDD) are disordered.

It belongs to the protein kinase superfamily. Ser/Thr protein kinase family. As to quaternary structure, oligomer. Interacts with geminivirus nuclear shuttle protein (NSP). Autophosphorylated. Expressed in flowers and roots.

Its subcellular location is the cell membrane. It catalyses the reaction L-seryl-[protein] + ATP = O-phospho-L-seryl-[protein] + ADP + H(+). The enzyme catalyses L-threonyl-[protein] + ATP = O-phospho-L-threonyl-[protein] + ADP + H(+). With respect to regulation, inhibited by the viral nuclear shuttle protein (NSP) that binds to the region required for oligomerization. Functionally, involved in defense response to geminivirus infection. Phosphorylates RPL10A in vitro. The polypeptide is Protein NSP-INTERACTING KINASE 2 (NIK2) (Arabidopsis thaliana (Mouse-ear cress)).